The sequence spans 202 residues: Small ribosomal subunit protein uS4c (202 aa).

One can recognise an S4 RNA-binding domain in the interval 90 to 153; sequence MRLDNVIFRL…KSEAIISKNI (64 aa).

This sequence belongs to the universal ribosomal protein uS4 family. Part of the 30S ribosomal subunit. Contacts protein S5. The interaction surface between S4 and S5 is involved in control of translational fidelity.

It localises to the plastid. The protein localises to the chloroplast. Its function is as follows. One of the primary rRNA binding proteins, it binds directly to 16S rRNA where it nucleates assembly of the body of the 30S subunit. In terms of biological role, with S5 and S12 plays an important role in translational accuracy. This Hypopterygium laricinum (Moss) protein is Small ribosomal subunit protein uS4c (rps4).